The primary structure comprises 409 residues: tRNA(Met) cytidine acetate ligase (409 aa).

ATP is bound by residues 7–20 (VVEY…HLYH), Gly-102, Asn-169, and Arg-194.

It belongs to the TmcAL family.

The protein localises to the cytoplasm. It catalyses the reaction cytidine(34) in elongator tRNA(Met) + acetate + ATP = N(4)-acetylcytidine(34) in elongator tRNA(Met) + AMP + diphosphate. In terms of biological role, catalyzes the formation of N(4)-acetylcytidine (ac(4)C) at the wobble position of elongator tRNA(Met), using acetate and ATP as substrates. First activates an acetate ion to form acetyladenylate (Ac-AMP) and then transfers the acetyl group to tRNA to form ac(4)C34. This is tRNA(Met) cytidine acetate ligase from Clostridium botulinum (strain ATCC 19397 / Type A).